The following is a 360-amino-acid chain: Histidinol-phosphate aminotransferase (360 aa).

Lysine 223 carries the post-translational modification N6-(pyridoxal phosphate)lysine.

It belongs to the class-II pyridoxal-phosphate-dependent aminotransferase family. Histidinol-phosphate aminotransferase subfamily. In terms of assembly, homodimer. It depends on pyridoxal 5'-phosphate as a cofactor.

The catalysed reaction is L-histidinol phosphate + 2-oxoglutarate = 3-(imidazol-4-yl)-2-oxopropyl phosphate + L-glutamate. The protein operates within amino-acid biosynthesis; L-histidine biosynthesis; L-histidine from 5-phospho-alpha-D-ribose 1-diphosphate: step 7/9. The sequence is that of Histidinol-phosphate aminotransferase (hisC) from Bacillus subtilis (strain 168).